Reading from the N-terminus, the 111-residue chain is Large ribosomal subunit protein uL22 (111 aa).

This sequence belongs to the universal ribosomal protein uL22 family. In terms of assembly, part of the 50S ribosomal subunit.

Its function is as follows. This protein binds specifically to 23S rRNA; its binding is stimulated by other ribosomal proteins, e.g. L4, L17, and L20. It is important during the early stages of 50S assembly. It makes multiple contacts with different domains of the 23S rRNA in the assembled 50S subunit and ribosome. The globular domain of the protein is located near the polypeptide exit tunnel on the outside of the subunit, while an extended beta-hairpin is found that lines the wall of the exit tunnel in the center of the 70S ribosome. The polypeptide is Large ribosomal subunit protein uL22 (Pelobacter propionicus (strain DSM 2379 / NBRC 103807 / OttBd1)).